We begin with the raw amino-acid sequence, 414 residues long: tRNA N6-adenosine threonylcarbamoyltransferase, mitochondrial (414 aa).

The transit peptide at 1–29 (MLMLSKTAGAIPRPPRSNVRGFIRRFNVQ) directs the protein to the mitochondrion. N6-acetyllysine is present on residues Lys74 and Lys140. The a divalent metal cation site is built by His147 and His151. Substrate is bound by residues 169-173 (LISGG) and Asp202. Lys203 bears the N6-acetyllysine mark. Residues Gly222 and Glu226 each contribute to the substrate site. An N6-acetyllysine mark is found at Lys230 and Lys299. Substrate-binding positions include 329–330 (SN) and Thr357. Residue Asp358 coordinates a divalent metal cation.

The protein belongs to the KAE1 / TsaD family. As to quaternary structure, monomer. It depends on a divalent metal cation as a cofactor.

It localises to the mitochondrion. It catalyses the reaction L-threonylcarbamoyladenylate + adenosine(37) in tRNA = N(6)-L-threonylcarbamoyladenosine(37) in tRNA + AMP + H(+). In terms of biological role, required for the formation of a threonylcarbamoyl group on adenosine at position 37 (t(6)A37) in mitochondrial tRNAs that read codons beginning with adenine. Probably involved in the transfer of the threonylcarbamoyl moiety of threonylcarbamoyl-AMP (TC-AMP) to the N6 group of A37. Involved in mitochondrial genome maintenance. This Rattus norvegicus (Rat) protein is tRNA N6-adenosine threonylcarbamoyltransferase, mitochondrial.